The primary structure comprises 458 residues: MSFDFIKDKNKHIHFIGIGGISMSGLAEILLYNNFSISGSDMNSSPITEKLKDKGAKIYIGHKKENVKDADLIVYTAAIASDNPEIIEAKEKNIKLMDRADFLGNLMKGYKYNIAISGTHGKTTTTSMLSHVALKANVDPTILVGGNLDIINGNVRVGESDFFITEACEYKSSFLKFFPYIGVILNIDADHLDYYKDLDDIKNAFSKFIKLIPKDGYLVAYGEDKNIQSIIKEANCNVITYGINSGDIQAHNIEYDEKACGNFDVFKDNQKLFSVKLNVPGKHNILNSLASICIGLASDMKDKDIIEGIESFFGTHRRFELKGCKNNITVIDDYAHHPTEISATLDAAKKYPHNKMFCVFQPHTYSRTLTLFDDFTKCFDNADEIILADIYAAREKDTGIINSNMLGDKLRERGLKCTNFHKFDDIKNYLIENAKDGDLILTIGAGDIYKVGEMYINL.

118–124 (GTHGKTT) is a binding site for ATP.

Belongs to the MurCDEF family.

It is found in the cytoplasm. It carries out the reaction UDP-N-acetyl-alpha-D-muramate + L-alanine + ATP = UDP-N-acetyl-alpha-D-muramoyl-L-alanine + ADP + phosphate + H(+). Its pathway is cell wall biogenesis; peptidoglycan biosynthesis. In terms of biological role, cell wall formation. This chain is UDP-N-acetylmuramate--L-alanine ligase, found in Clostridium botulinum (strain Loch Maree / Type A3).